A 38-amino-acid polypeptide reads, in one-letter code: Large ribosomal subunit protein bL36c (38 aa).

It belongs to the bacterial ribosomal protein bL36 family.

It is found in the plastid. Its subcellular location is the chloroplast. The sequence is that of Large ribosomal subunit protein bL36c (rpl36) from Mesostigma viride (Green alga).